Reading from the N-terminus, the 108-residue chain is UPF0145 protein LJ_1287 (108 aa).

The protein belongs to the UPF0145 family.

This is UPF0145 protein LJ_1287 from Lactobacillus johnsonii (strain CNCM I-12250 / La1 / NCC 533).